The chain runs to 91 residues: Small ribosomal subunit protein uS19 (91 aa).

The protein belongs to the universal ribosomal protein uS19 family.

Its function is as follows. Protein S19 forms a complex with S13 that binds strongly to the 16S ribosomal RNA. This chain is Small ribosomal subunit protein uS19, found in Aliarcobacter butzleri (strain RM4018) (Arcobacter butzleri).